The primary structure comprises 291 residues: 4-hydroxy-tetrahydrodipicolinate synthase (291 aa).

Thr-44 serves as a coordination point for pyruvate. Tyr-132 functions as the Proton donor/acceptor in the catalytic mechanism. The active-site Schiff-base intermediate with substrate is Lys-160. Residue Val-202 coordinates pyruvate.

It belongs to the DapA family. In terms of assembly, homotetramer; dimer of dimers.

It is found in the cytoplasm. It carries out the reaction L-aspartate 4-semialdehyde + pyruvate = (2S,4S)-4-hydroxy-2,3,4,5-tetrahydrodipicolinate + H2O + H(+). It participates in amino-acid biosynthesis; L-lysine biosynthesis via DAP pathway; (S)-tetrahydrodipicolinate from L-aspartate: step 3/4. In terms of biological role, catalyzes the condensation of (S)-aspartate-beta-semialdehyde [(S)-ASA] and pyruvate to 4-hydroxy-tetrahydrodipicolinate (HTPA). This is 4-hydroxy-tetrahydrodipicolinate synthase from Clostridium perfringens (strain 13 / Type A).